Here is a 346-residue protein sequence, read N- to C-terminus: Aspartate-semialdehyde dehydrogenase (346 aa).

Residues 10 to 13 (TGQG) and 38 to 39 (RS) contribute to the NADP(+) site. Arginine 98 contributes to the phosphate binding site. The active-site Acyl-thioester intermediate is the cysteine 131. Glutamine 158 contacts substrate. 161 to 162 (SG) provides a ligand contact to NADP(+). Position 228 (lysine 228) interacts with phosphate. Position 250 (arginine 250) interacts with substrate. Residue histidine 257 is the Proton acceptor of the active site. Residue asparagine 326 participates in NADP(+) binding.

The protein belongs to the aspartate-semialdehyde dehydrogenase family. As to quaternary structure, homodimer.

It catalyses the reaction L-aspartate 4-semialdehyde + phosphate + NADP(+) = 4-phospho-L-aspartate + NADPH + H(+). Its pathway is amino-acid biosynthesis; L-lysine biosynthesis via DAP pathway; (S)-tetrahydrodipicolinate from L-aspartate: step 2/4. The protein operates within amino-acid biosynthesis; L-methionine biosynthesis via de novo pathway; L-homoserine from L-aspartate: step 2/3. It participates in amino-acid biosynthesis; L-threonine biosynthesis; L-threonine from L-aspartate: step 2/5. Catalyzes the NADPH-dependent formation of L-aspartate-semialdehyde (L-ASA) by the reductive dephosphorylation of L-aspartyl-4-phosphate. This chain is Aspartate-semialdehyde dehydrogenase, found in Mycolicibacterium smegmatis (Mycobacterium smegmatis).